A 296-amino-acid chain; its full sequence is Ribonuclease MRP protein subunit POP4 (296 aa).

2 disordered regions span residues 29-74 (LLQQ…VDPK) and 148-173 (SASG…KRLK). Over residues 36-56 (KNEKDKKGTSDVDVSMKESHQ) the composition is skewed to basic and acidic residues. Residues 57-66 (ADSLPTPSKT) show a composition bias toward polar residues. The short motif at 160–167 (SKRSKSRM) is the Nuclear localization signal element. Basic residues predominate over residues 163-173 (SKSRMSMKRLK).

This sequence belongs to the eukaryotic/archaeal RNase P protein component 1 family. Component of nuclear RNase MRP complexes. Several subunits of RNase P are also part of the RNase MRP complex. RNase MRP consists of a catalytic RNA moiety and several protein subunits.

Its subcellular location is the nucleus. Its function is as follows. Component of the MRP ribonuclease complex, which cleaves pre-rRNA sequences. Required for rRNA maturation, including 5.8S rRNA processing. Seems not involved in tRNA maturation. The chain is Ribonuclease MRP protein subunit POP4 from Arabidopsis thaliana (Mouse-ear cress).